A 418-amino-acid polypeptide reads, in one-letter code: Serine--tRNA ligase (418 aa).

231 to 233 (TAE) contributes to the L-serine binding site. Residue 262–264 (RSE) coordinates ATP. Glu285 is an L-serine binding site. 349-352 (EISS) serves as a coordination point for ATP. Residue Ser385 coordinates L-serine.

It belongs to the class-II aminoacyl-tRNA synthetase family. Type-1 seryl-tRNA synthetase subfamily. Homodimer. The tRNA molecule binds across the dimer.

It is found in the cytoplasm. It catalyses the reaction tRNA(Ser) + L-serine + ATP = L-seryl-tRNA(Ser) + AMP + diphosphate + H(+). It carries out the reaction tRNA(Sec) + L-serine + ATP = L-seryl-tRNA(Sec) + AMP + diphosphate + H(+). It participates in aminoacyl-tRNA biosynthesis; selenocysteinyl-tRNA(Sec) biosynthesis; L-seryl-tRNA(Sec) from L-serine and tRNA(Sec): step 1/1. Functionally, catalyzes the attachment of serine to tRNA(Ser). Is also able to aminoacylate tRNA(Sec) with serine, to form the misacylated tRNA L-seryl-tRNA(Sec), which will be further converted into selenocysteinyl-tRNA(Sec). This is Serine--tRNA ligase from Ureaplasma parvum serovar 3 (strain ATCC 27815 / 27 / NCTC 11736).